The following is a 573-amino-acid chain: Isocitrate dehydrogenase kinase/phosphatase (573 aa).

Residues 318–324 (APGVRGM) and Lys339 each bind ATP. Residue Asp374 is part of the active site.

Belongs to the AceK family.

Its subcellular location is the cytoplasm. The catalysed reaction is L-seryl-[isocitrate dehydrogenase] + ATP = O-phospho-L-seryl-[isocitrate dehydrogenase] + ADP + H(+). Functionally, bifunctional enzyme which can phosphorylate or dephosphorylate isocitrate dehydrogenase (IDH) on a specific serine residue. This is a regulatory mechanism which enables bacteria to bypass the Krebs cycle via the glyoxylate shunt in response to the source of carbon. When bacteria are grown on glucose, IDH is fully active and unphosphorylated, but when grown on acetate or ethanol, the activity of IDH declines drastically concomitant with its phosphorylation. This Stutzerimonas stutzeri (strain A1501) (Pseudomonas stutzeri) protein is Isocitrate dehydrogenase kinase/phosphatase.